The primary structure comprises 93 residues: Phosphoribosyl-ATP pyrophosphatase (93 aa).

This sequence belongs to the PRA-PH family.

Its subcellular location is the cytoplasm. It catalyses the reaction 1-(5-phospho-beta-D-ribosyl)-ATP + H2O = 1-(5-phospho-beta-D-ribosyl)-5'-AMP + diphosphate + H(+). The protein operates within amino-acid biosynthesis; L-histidine biosynthesis; L-histidine from 5-phospho-alpha-D-ribose 1-diphosphate: step 2/9. The chain is Phosphoribosyl-ATP pyrophosphatase from Mycobacterium leprae (strain Br4923).